A 432-amino-acid polypeptide reads, in one-letter code: Gamma-glutamyl phosphate reductase (432 aa).

The protein belongs to the gamma-glutamyl phosphate reductase family.

The protein resides in the cytoplasm. It carries out the reaction L-glutamate 5-semialdehyde + phosphate + NADP(+) = L-glutamyl 5-phosphate + NADPH + H(+). Its pathway is amino-acid biosynthesis; L-proline biosynthesis; L-glutamate 5-semialdehyde from L-glutamate: step 2/2. In terms of biological role, catalyzes the NADPH-dependent reduction of L-glutamate 5-phosphate into L-glutamate 5-semialdehyde and phosphate. The product spontaneously undergoes cyclization to form 1-pyrroline-5-carboxylate. In Methylobacterium radiotolerans (strain ATCC 27329 / DSM 1819 / JCM 2831 / NBRC 15690 / NCIMB 10815 / 0-1), this protein is Gamma-glutamyl phosphate reductase.